The primary structure comprises 660 residues: Bifunctional polymyxin resistance protein ArnA (660 aa).

The segment at 1–304 is formyltransferase ArnAFT; the sequence is MKAVIFAYHD…TLGLVAGARL (304 aa). His104 functions as the Proton donor; for formyltransferase activity in the catalytic mechanism. (6R)-10-formyltetrahydrofolate contacts are provided by residues Arg114 and 136 to 140; that span reads VKRAD. The interval 314 to 660 is dehydrogenase ArnADH; that stretch reads RRIRVLILGV…RSVDVAERAS (347 aa). NAD(+)-binding positions include Asp347 and 368–369; that span reads DI. UDP-alpha-D-glucuronate contacts are provided by residues Ala393, Tyr398, and 432 to 433; that span reads TS. Glu434 functions as the Proton acceptor; for decarboxylase activity in the catalytic mechanism. UDP-alpha-D-glucuronate contacts are provided by residues Arg460, Asn492, 526–535, and Tyr613; that span reads KLIDGGQQKR. The Proton donor; for decarboxylase activity role is filled by Arg619.

It in the N-terminal section; belongs to the Fmt family. UDP-L-Ara4N formyltransferase subfamily. This sequence in the C-terminal section; belongs to the NAD(P)-dependent epimerase/dehydratase family. UDP-glucuronic acid decarboxylase subfamily. Homohexamer, formed by a dimer of trimers.

It carries out the reaction UDP-alpha-D-glucuronate + NAD(+) = UDP-beta-L-threo-pentopyranos-4-ulose + CO2 + NADH. The enzyme catalyses UDP-4-amino-4-deoxy-beta-L-arabinose + (6R)-10-formyltetrahydrofolate = UDP-4-deoxy-4-formamido-beta-L-arabinose + (6S)-5,6,7,8-tetrahydrofolate + H(+). It participates in nucleotide-sugar biosynthesis; UDP-4-deoxy-4-formamido-beta-L-arabinose biosynthesis; UDP-4-deoxy-4-formamido-beta-L-arabinose from UDP-alpha-D-glucuronate: step 1/3. The protein operates within nucleotide-sugar biosynthesis; UDP-4-deoxy-4-formamido-beta-L-arabinose biosynthesis; UDP-4-deoxy-4-formamido-beta-L-arabinose from UDP-alpha-D-glucuronate: step 3/3. It functions in the pathway bacterial outer membrane biogenesis; lipopolysaccharide biosynthesis. In terms of biological role, bifunctional enzyme that catalyzes the oxidative decarboxylation of UDP-glucuronic acid (UDP-GlcUA) to UDP-4-keto-arabinose (UDP-Ara4O) and the addition of a formyl group to UDP-4-amino-4-deoxy-L-arabinose (UDP-L-Ara4N) to form UDP-L-4-formamido-arabinose (UDP-L-Ara4FN). The modified arabinose is attached to lipid A and is required for resistance to polymyxin and cationic antimicrobial peptides. The sequence is that of Bifunctional polymyxin resistance protein ArnA from Salmonella choleraesuis (strain SC-B67).